Here is a 201-residue protein sequence, read N- to C-terminus: Recombination protein RecR (201 aa).

A C4-type zinc finger spans residues 60–75; sequence CSVCGNVDTIDPCSIC. In terms of domain architecture, Toprim spans 83–178; the sequence is ATIIVVEDIA…KVTRLAHGVP (96 aa).

Belongs to the RecR family.

Its function is as follows. May play a role in DNA repair. It seems to be involved in an RecBC-independent recombinational process of DNA repair. It may act with RecF and RecO. The protein is Recombination protein RecR of Bartonella henselae (strain ATCC 49882 / DSM 28221 / CCUG 30454 / Houston 1) (Rochalimaea henselae).